The sequence spans 460 residues: Photosystem II CP43 reaction center protein (460 aa).

Residues 1–35 (MVTLSNTSMVGGRDLPSTGFAWWSGNARLINLSGK) lie on the Cytoplasmic side of the membrane. A helical membrane pass occupies residues 36–58 (LLGAHVAHAGLIVFWAGAMTLFE). At 59 to 98 (VAHFIPEKPMYEQGLILLPHIATLGWGVGPAGEVTDIFPF) the chain is on the lumenal, thylakoid side. A helical membrane pass occupies residues 99–121 (FVVGVLHLISSAVLGLGGIYHAL). Residues 122–142 (RGPEVLEEYSSFFGYDWKDKN) lie on the Cytoplasmic side of the membrane. The chain crosses the membrane as a helical span at residues 143-165 (QMTNIIGYHLILLGCGALLLVFK). The Lumenal, thylakoid portion of the chain corresponds to 166-220 (AMFFGGVYDTWAPGGGDVRVITNPTLNPAIIFGYLLKAPFGGEGWIISVNNMEDI). A helical membrane pass occupies residues 221–240 (IGGHIWIGLICISGGIWHIL). Residues 241–255 (TKPFGWARRALIWSG) are Cytoplasmic-facing. The helical transmembrane segment at 256 to 276 (EAYLSYSLGALSLMGFIASVF) threads the bilayer. Topologically, residues 277–411 (VWFNNTAYPS…NSFNYVSPRA (135 aa)) are lumenal, thylakoid. [CaMn4O5] cluster-binding residues include Glu-341 and Arg-344. Residues 412 to 436 (WLATSHFVLGFFFLVGHLWHAGRAR) traverse the membrane as a helical segment. At 437–460 (AAAAGFEKGIDRETEPTLFMPDLD) the chain is on the cytoplasmic side.

It belongs to the PsbB/PsbC family. PsbC subfamily. In terms of assembly, PSII is composed of 1 copy each of membrane proteins PsbA, PsbB, PsbC, PsbD, PsbE, PsbF, PsbH, PsbI, PsbJ, PsbK, PsbL, PsbM, PsbT, PsbX, PsbY, PsbZ, Psb30/Ycf12, peripheral proteins PsbO, CyanoQ (PsbQ), PsbU, PsbV and a large number of cofactors. It forms dimeric complexes. The cofactor is Binds multiple chlorophylls and provides some of the ligands for the Ca-4Mn-5O cluster of the oxygen-evolving complex. It may also provide a ligand for a Cl- that is required for oxygen evolution. PSII binds additional chlorophylls, carotenoids and specific lipids..

It localises to the cellular thylakoid membrane. Its function is as follows. One of the components of the core complex of photosystem II (PSII). PSII binds chlorophyll and helps catalyze the primary light-induced photochemical processes of PSII. PSII is a light-driven water:plastoquinone oxidoreductase, using light energy to abstract electrons from H(2)O, generating O(2) and a proton gradient subsequently used for ATP formation. Required for correct assembly of PSII. This Synechocystis sp. (strain ATCC 27184 / PCC 6803 / Kazusa) protein is Photosystem II CP43 reaction center protein.